The sequence spans 358 residues: DNA integrity scanning protein DisA (358 aa).

The DAC domain maps to 9-147; it reads KQDLSEILQF…ENMKYILKDI (139 aa). ATP contacts are provided by residues Gly-76, Leu-94, and 107-111; that span reads MRHRT.

The protein belongs to the DisA family. In terms of assembly, homooctamer. Mg(2+) is required as a cofactor.

It catalyses the reaction 2 ATP = 3',3'-c-di-AMP + 2 diphosphate. Its function is as follows. Participates in a DNA-damage check-point that is active prior to asymmetric division when DNA is damaged. DisA forms globular foci that rapidly scan along the chromosomes during sporulation, searching for lesions. When a lesion is present, DisA pauses at the lesion site. This triggers a cellular response that culminates in a temporary block in sporulation initiation. Also has diadenylate cyclase activity, catalyzing the condensation of 2 ATP molecules into cyclic di-AMP (c-di-AMP). c-di-AMP acts as a signaling molecule that couples DNA integrity with progression of sporulation. The rise in c-di-AMP level generated by DisA while scanning the chromosome, operates as a positive signal that advances sporulation; upon encountering a lesion, the DisA focus arrests at the damaged site and halts c-di-AMP synthesis. The sequence is that of DNA integrity scanning protein DisA from Bacillus licheniformis (strain ATCC 14580 / DSM 13 / JCM 2505 / CCUG 7422 / NBRC 12200 / NCIMB 9375 / NCTC 10341 / NRRL NRS-1264 / Gibson 46).